Reading from the N-terminus, the 206-residue chain is Small ribosomal subunit protein uS4 (206 aa).

Positions 96 to 156 constitute an S4 RNA-binding domain; that stretch reads SRLDNVVYRM…EKSKKQLRIQ (61 aa).

This sequence belongs to the universal ribosomal protein uS4 family. In terms of assembly, part of the 30S ribosomal subunit. Contacts protein S5. The interaction surface between S4 and S5 is involved in control of translational fidelity.

Its function is as follows. One of the primary rRNA binding proteins, it binds directly to 16S rRNA where it nucleates assembly of the body of the 30S subunit. Functionally, with S5 and S12 plays an important role in translational accuracy. The chain is Small ribosomal subunit protein uS4 from Francisella philomiragia subsp. philomiragia (strain ATCC 25017 / CCUG 19701 / FSC 153 / O#319-036).